Here is a 479-residue protein sequence, read N- to C-terminus: Ribosomal RNA small subunit methyltransferase F (479 aa).

S-adenosyl-L-methionine contacts are provided by residues 125 to 131 (AAAPGSK), glutamate 149, aspartate 176, and aspartate 194. Cysteine 247 acts as the Nucleophile in catalysis.

This sequence belongs to the class I-like SAM-binding methyltransferase superfamily. RsmB/NOP family.

The protein resides in the cytoplasm. It catalyses the reaction cytidine(1407) in 16S rRNA + S-adenosyl-L-methionine = 5-methylcytidine(1407) in 16S rRNA + S-adenosyl-L-homocysteine + H(+). Its function is as follows. Specifically methylates the cytosine at position 1407 (m5C1407) of 16S rRNA. The polypeptide is Ribosomal RNA small subunit methyltransferase F (Shigella sonnei (strain Ss046)).